The sequence spans 226 residues: MGIRAIVVDTAGTTTDLTFIQDVLFPYSVKALPDFLAQNQHNVLVENCICDTRDIALEPDADLARVTEILQQWVHEDRKATPLKTLQGLIWKQGYAHGEFTGHIFPDFIEAVNRFSAQKLRIYSFSSGSVEAQKLLFSHSDGGDLTEMFSGHFDTRTGNKLDKQAYANILNTISLSPKQVLFVSDVVEELKAAEAAGMMTCQMVRDSKQRTGDFRTINSFDELVID.

The protein belongs to the HAD-like hydrolase superfamily. MasA/MtnC family. Monomer. It depends on Mg(2+) as a cofactor.

The enzyme catalyses 5-methylsulfanyl-2,3-dioxopentyl phosphate + H2O = 1,2-dihydroxy-5-(methylsulfanyl)pent-1-en-3-one + phosphate. The protein operates within amino-acid biosynthesis; L-methionine biosynthesis via salvage pathway; L-methionine from S-methyl-5-thio-alpha-D-ribose 1-phosphate: step 3/6. It participates in amino-acid biosynthesis; L-methionine biosynthesis via salvage pathway; L-methionine from S-methyl-5-thio-alpha-D-ribose 1-phosphate: step 4/6. Functionally, bifunctional enzyme that catalyzes the enolization of 2,3-diketo-5-methylthiopentyl-1-phosphate (DK-MTP-1-P) into the intermediate 2-hydroxy-3-keto-5-methylthiopentenyl-1-phosphate (HK-MTPenyl-1-P), which is then dephosphorylated to form the acireductone 1,2-dihydroxy-3-keto-5-methylthiopentene (DHK-MTPene). The sequence is that of Enolase-phosphatase E1 from Shewanella sp. (strain MR-4).